Consider the following 429-residue polypeptide: Tol-Pal system protein TolB (429 aa).

The signal sequence occupies residues 1–21 (MKPVFKMLLSLLILWTSLLHA).

The protein belongs to the TolB family. The Tol-Pal system is composed of five core proteins: the inner membrane proteins TolA, TolQ and TolR, the periplasmic protein TolB and the outer membrane protein Pal. They form a network linking the inner and outer membranes and the peptidoglycan layer.

Its subcellular location is the periplasm. Functionally, part of the Tol-Pal system, which plays a role in outer membrane invagination during cell division and is important for maintaining outer membrane integrity. TolB occupies a key intermediary position in the Tol-Pal system because it communicates directly with both membrane-embedded components, Pal in the outer membrane and TolA in the inner membrane. The sequence is that of Tol-Pal system protein TolB from Hamiltonella defensa subsp. Acyrthosiphon pisum (strain 5AT).